Here is a 738-residue protein sequence, read N- to C-terminus: Catalase-peroxidase (738 aa).

An N-terminal signal peptide occupies residues 1-24 (MEPLFPKRLLSIAVLCVASATAQA). A cross-link (tryptophyl-tyrosyl-methioninium (Trp-Tyr) (with M-252)) is located at residues 104–226 (WHAAGTYRMI…FGATEMGLIY (123 aa)). Catalysis depends on His-105, which acts as the Proton acceptor. The segment at 191 to 213 (EEVNWGPEGQWLTDRRHSGDRKL) is disordered. Residues 203–213 (TDRRHSGDRKL) are compositionally biased toward basic and acidic residues. Residues 226–252 (YVNPEGPHGNPDPIAAAHDIRQAFGRM) constitute a cross-link (tryptophyl-tyrosyl-methioninium (Tyr-Met) (with W-104)). Position 267 (His-267) interacts with heme b.

The protein belongs to the peroxidase family. Peroxidase/catalase subfamily. Homodimer or homotetramer. Requires heme b as cofactor. Post-translationally, formation of the three residue Trp-Tyr-Met cross-link is important for the catalase, but not the peroxidase activity of the enzyme.

It carries out the reaction H2O2 + AH2 = A + 2 H2O. The catalysed reaction is 2 H2O2 = O2 + 2 H2O. In terms of biological role, bifunctional enzyme with both catalase and broad-spectrum peroxidase activity. This is Catalase-peroxidase from Saccharophagus degradans (strain 2-40 / ATCC 43961 / DSM 17024).